Here is a 212-residue protein sequence, read N- to C-terminus: 2-phospho-L-lactate guanylyltransferase (212 aa).

Belongs to the CofC family. Homodimer.

It catalyses the reaction (2S)-2-phospholactate + GTP + H(+) = (2S)-lactyl-2-diphospho-5'-guanosine + diphosphate. The protein operates within cofactor biosynthesis; coenzyme F420 biosynthesis. Its function is as follows. Guanylyltransferase that catalyzes the activation of (2S)-2-phospholactate (2-PL) as (2S)-lactyl-2-diphospho-5'-guanosine, via the condensation of 2-PL with GTP. It is involved in the biosynthesis of coenzyme F420, a hydride carrier cofactor. The polypeptide is 2-phospho-L-lactate guanylyltransferase (Methanocorpusculum labreanum (strain ATCC 43576 / DSM 4855 / Z)).